The chain runs to 198 residues: Nucleoside triphosphate pyrophosphatase (198 aa).

Residue Asp-75 is the Proton acceptor of the active site.

It belongs to the Maf family. It depends on a divalent metal cation as a cofactor.

It is found in the cytoplasm. It catalyses the reaction a ribonucleoside 5'-triphosphate + H2O = a ribonucleoside 5'-phosphate + diphosphate + H(+). The catalysed reaction is a 2'-deoxyribonucleoside 5'-triphosphate + H2O = a 2'-deoxyribonucleoside 5'-phosphate + diphosphate + H(+). Functionally, nucleoside triphosphate pyrophosphatase. May have a dual role in cell division arrest and in preventing the incorporation of modified nucleotides into cellular nucleic acids. This chain is Nucleoside triphosphate pyrophosphatase, found in Hyphomonas neptunium (strain ATCC 15444).